The following is a 268-amino-acid chain: Shikimate dehydrogenase (NADP(+)) (268 aa).

Shikimate contacts are provided by residues 14–16 and threonine 61; that span reads SKS. Residue lysine 65 is the Proton acceptor of the active site. The shikimate site is built by asparagine 86 and aspartate 102. Residues 126–130, 149–154, and methionine 213 contribute to the NADP(+) site; these read GAGGA and NRTFSK. Tyrosine 215 serves as a coordination point for shikimate. Glycine 238 is an NADP(+) binding site.

The protein belongs to the shikimate dehydrogenase family. In terms of assembly, homodimer.

The enzyme catalyses shikimate + NADP(+) = 3-dehydroshikimate + NADPH + H(+). It participates in metabolic intermediate biosynthesis; chorismate biosynthesis; chorismate from D-erythrose 4-phosphate and phosphoenolpyruvate: step 4/7. Its function is as follows. Involved in the biosynthesis of the chorismate, which leads to the biosynthesis of aromatic amino acids. Catalyzes the reversible NADPH linked reduction of 3-dehydroshikimate (DHSA) to yield shikimate (SA). The protein is Shikimate dehydrogenase (NADP(+)) of Haemophilus influenzae (strain PittEE).